We begin with the raw amino-acid sequence, 318 residues long: Dimethyladenosine transferase (318 aa).

H37, L39, G64, E85, D113, and N128 together coordinate S-adenosyl-L-methionine.

This sequence belongs to the class I-like SAM-binding methyltransferase superfamily. rRNA adenine N(6)-methyltransferase family.

The protein localises to the cytoplasm. Its subcellular location is the nucleus. It localises to the nucleolus. The catalysed reaction is adenosine(1779)/adenosine(1780) in 18S rRNA + 4 S-adenosyl-L-methionine = N(6)-dimethyladenosine(1779)/N(6)-dimethyladenosine(1780) in 18S rRNA + 4 S-adenosyl-L-homocysteine + 4 H(+). In terms of biological role, specifically dimethylates two adjacent adenosines in the loop of a conserved hairpin near the 3'-end of 18S rRNA in the 40S particle. This chain is Dimethyladenosine transferase, found in Saccharomyces cerevisiae (strain ATCC 204508 / S288c) (Baker's yeast).